The chain runs to 79 residues: Large ribosomal subunit protein bL31 (79 aa).

Residues C16, C18, C37, and C40 each coordinate Zn(2+).

The protein belongs to the bacterial ribosomal protein bL31 family. Type A subfamily. As to quaternary structure, part of the 50S ribosomal subunit. Zn(2+) serves as cofactor.

Functionally, binds the 23S rRNA. This is Large ribosomal subunit protein bL31 from Coxiella burnetii (strain CbuG_Q212) (Coxiella burnetii (strain Q212)).